Reading from the N-terminus, the 349-residue chain is N-formyl peptide receptor 3 (349 aa).

The Extracellular segment spans residues 1 to 27 (METNFSIPLNETEEVLPEPAGHTVLWI). N-linked (GlcNAc...) asparagine glycans are attached at residues N4 and N10. The helical transmembrane segment at 28 to 50 (FSLLVHGVTFVFGVLGNGLVIWV) threads the bilayer. The Cytoplasmic segment spans residues 51–61 (AGFRMTRTVNT). A helical membrane pass occupies residues 62 to 83 (ICYLNLALADFSFSAILPFRMV). Residues 84-100 (SVAMREKWPFGSFLCKL) lie on the Extracellular side of the membrane. C98 and C176 form a disulfide bridge. The helical transmembrane segment at 101 to 121 (VHVMIDINLFVSVYLITIIAL) threads the bilayer. Residues 122 to 140 (DRCICVLHPAWAQNHRTMS) lie on the Cytoplasmic side of the membrane. The helical transmembrane segment at 141 to 162 (LAKRVMTGLWILTIVLTLPNFI) threads the bilayer. At 163-205 (FWTTIRTTNGDTYCIFNFAFWGDTAVERLNVFITMAKVFLILH) the chain is on the extracellular side. Residues 206 to 226 (FIIGFSMPMSIITVCYGIIAA) form a helical membrane-spanning segment. Over 227–242 (KIHRNHMIKSSRPLRV) the chain is Cytoplasmic. Residues 243–266 (FAAVVASFFICWFPYELIGILMAV) traverse the membrane as a helical segment. Topologically, residues 267–286 (WLKEMLLNGKYKIILVLINP) are extracellular. A helical membrane pass occupies residues 287–306 (TSSLAFFNSCLNPILYVFMG). Residues 307–349 (RNFQERLIRSLPTSLERALTEVPDSAQTSNTHTTSASPPEETE) are Cytoplasmic-facing. Residues 327–349 (EVPDSAQTSNTHTTSASPPEETE) form a disordered region. Positions 331–343 (SAQTSNTHTTSAS) are enriched in polar residues.

Belongs to the G-protein coupled receptor 1 family.

It localises to the cell membrane. Functionally, low affinity receptor for N-formyl-methionyl peptides, which are powerful neutrophils chemotactic factors. Binding of FMLP to the receptor causes activation of neutrophils. This response is mediated via a G-protein that activates a phosphatidylinositol-calcium second messenger system. The polypeptide is N-formyl peptide receptor 3 (FPR3) (Pan troglodytes (Chimpanzee)).